A 200-amino-acid polypeptide reads, in one-letter code: LexA repressor (200 aa).

Residues 28-48 constitute a DNA-binding region (H-T-H motif); it reads RAEIARILGFKSANAAEEHIK. Residues S118 and K155 each act as for autocatalytic cleavage activity in the active site.

This sequence belongs to the peptidase S24 family. As to quaternary structure, homodimer.

The enzyme catalyses Hydrolysis of Ala-|-Gly bond in repressor LexA.. In terms of biological role, represses a number of genes involved in the response to DNA damage (SOS response), including recA and lexA. In the presence of single-stranded DNA, RecA interacts with LexA causing an autocatalytic cleavage which disrupts the DNA-binding part of LexA, leading to derepression of the SOS regulon and eventually DNA repair. This is LexA repressor from Cellvibrio japonicus (strain Ueda107) (Pseudomonas fluorescens subsp. cellulosa).